The chain runs to 590 residues: Muscarinic acetylcholine receptor M3 (590 aa).

At 1-67 (MTLHNNNTTS…DPLGGHTIWQ (67 aa)) the chain is on the extracellular side. N-linked (GlcNAc...) asparagine glycosylation is found at asparagine 6, asparagine 7, asparagine 15, asparagine 41, asparagine 48, and asparagine 53. Residues 68 to 91 (VVFIAFLTGVLALVTIIGNILVIV) traverse the membrane as a helical segment. Over 92–104 (AFKVNKQLKTVNN) the chain is Cytoplasmic. Residues 105-125 (YFLLSLACADLIIGVISMNLF) form a helical membrane-spanning segment. The Extracellular portion of the chain corresponds to 126–142 (TTYIIMNRWALGNLACD). A disulfide bridge links cysteine 141 with cysteine 221. Residues 143–164 (LWLSIDYVASNASVMNLLVISF) form a helical membrane-spanning segment. Residues 165–184 (DRYFSITRPLTYRAKRTTKR) are Cytoplasmic-facing. A helical membrane pass occupies residues 185–207 (AGVMIGLAWVISFILWAPAILFW). Residues 208–229 (QYFVGKRTVPPGECFIQFLSEP) lie on the Extracellular side of the membrane. Residues 230-252 (TITFGTAIAAFYMPVTIMTILYW) form a helical membrane-spanning segment. Topologically, residues 253-492 (RIYKETEKRT…LIKEKKAAQT (240 aa)) are cytoplasmic. The short motif at 275-281 (AEAENFV) is the Basolateral sorting signal element. A disordered region spans residues 324–357 (AEQMDQDHSSSDSWNNNDAAASLENSASSDEEDI). The span at 334 to 345 (SDSWNNNDAAAS) shows a compositional bias: low complexity. At serine 385 the chain carries Phosphoserine. The disordered stretch occupies residues 398–419 (SVGLERKPSKLQTQQSMDDGGS). Polar residues predominate over residues 407–419 (KLQTQQSMDDGGS). A helical membrane pass occupies residues 493 to 513 (LSAILLAFIITWTPYNIMVLV). Residues 514 to 527 (NTFCDSCIPKTYWN) are Extracellular-facing. A helical transmembrane segment spans residues 528–547 (LGYWLCYINSTVNPVCYALC). Topologically, residues 548–590 (NKTFRNTFKMLLLCQCDKRKRRKQQYQQRQSVIFHKRVPEQAL) are cytoplasmic.

It belongs to the G-protein coupled receptor 1 family. Muscarinic acetylcholine receptor subfamily. CHRM3 sub-subfamily. As to quaternary structure, homodimer; the dimers can form tetramers. Interacts with NALCN. Interacts with TMEM147.

The protein resides in the cell membrane. It localises to the postsynaptic cell membrane. Its subcellular location is the basolateral cell membrane. It is found in the endoplasmic reticulum membrane. In terms of biological role, the muscarinic acetylcholine receptor mediates various cellular responses, including inhibition of adenylate cyclase, breakdown of phosphoinositides and modulation of potassium channels through the action of G proteins. Primary transducing effect is Pi turnover. In Bos taurus (Bovine), this protein is Muscarinic acetylcholine receptor M3 (CHRM3).